The sequence spans 264 residues: Stress response regulator protein 1 (264 aa).

Residues 50 to 74 (IYSDCDNNKNNNDDDDDDDDYNKDT) are disordered. Residues 62-74 (DDDDDDDDYNKDT) show a composition bias toward acidic residues. The 119-residue stretch at 138-256 (RFLIVDDNII…LDLIGGSIDD (119 aa)) folds into the Response regulatory domain. Aspartate 189 is subject to 4-aspartylphosphate.

Its function is as follows. Required for stress adaptation, morphogenesis and virulence. The polypeptide is Stress response regulator protein 1 (SRR1) (Candida tropicalis (strain ATCC MYA-3404 / T1) (Yeast)).